Reading from the N-terminus, the 460-residue chain is Squalene synthase (460 aa).

The chain crosses the membrane as a helical span at residues Ile425 to Phe445.

This sequence belongs to the phytoene/squalene synthase family. Interacts with pof14. Mg(2+) serves as cofactor.

It is found in the endoplasmic reticulum membrane. The catalysed reaction is 2 (2E,6E)-farnesyl diphosphate + NADPH + H(+) = squalene + 2 diphosphate + NADP(+). It catalyses the reaction 2 (2E,6E)-farnesyl diphosphate + NADH + H(+) = squalene + 2 diphosphate + NAD(+). Its pathway is terpene metabolism; lanosterol biosynthesis; lanosterol from farnesyl diphosphate: step 1/3. The protein operates within steroid metabolism; ergosterol biosynthesis. Functionally, squalene synthase; part of the third module of ergosterol biosynthesis pathway that includes by the late steps of the pathway. Erg9 produces squalene from 2 farnesyl pyrophosphate moieties. The third module or late pathway involves the ergosterol synthesis itself through consecutive reactions that mainly occur in the endoplasmic reticulum (ER) membrane. Firstly, the squalene synthase erg9 catalyzes the condensation of 2 farnesyl pyrophosphate moieties to form squalene, which is the precursor of all steroids. Secondly, squalene is converted into lanosterol by the consecutive action of the squalene epoxidase erg1 and the lanosterol synthase erg7. The lanosterol 14-alpha-demethylase erg11/cyp1 catalyzes C14-demethylation of lanosterol to produce 4,4'-dimethyl cholesta-8,14,24-triene-3-beta-ol. In the next steps, a complex process involving various demethylation, reduction and desaturation reactions catalyzed by the C-14 reductase erg24 and the C-4 demethylation complex erg25-erg26-erg27 leads to the production of zymosterol. Erg28 likely functions in the C-4 demethylation complex reaction by tethering erg26 and Erg27 to the endoplasmic reticulum or to facilitate interaction between these proteins. Then, the sterol 24-C-methyltransferase erg6 catalyzes the methyl transfer from S-adenosyl-methionine to the C-24 of zymosterol to form fecosterol. The C-8 sterol isomerase erg2 catalyzes the reaction which results in unsaturation at C-7 in the B ring of sterols and thus converts fecosterol to episterol. The sterol-C5-desaturases erg31 and erg32 then catalyze the introduction of a C-5 double bond in the B ring to produce 5-dehydroepisterol. The C-22 sterol desaturase erg5 further converts 5-dehydroepisterol into ergosta-5,7,22,24(28)-tetraen-3beta-ol by forming the C-22(23) double bond in the sterol side chain. Finally, ergosta-5,7,22,24(28)-tetraen-3beta-ol is substrate of the C-24(28) sterol reductase erg4 to produce ergosterol. In the genus Schizosaccharomyces, a second route exists between lanosterol and fecosterol, via the methylation of lanosterol to eburicol by erg6, followed by C14-demethylation by erg11/cyp1 and C4-demethylation by the demethylation complex erg25-erg26-erg27. The chain is Squalene synthase from Schizosaccharomyces pombe (strain 972 / ATCC 24843) (Fission yeast).